We begin with the raw amino-acid sequence, 241 residues long: Tetraspanin-1 (241 aa).

The Cytoplasmic portion of the chain corresponds to 1–11 (MQCFSFIKTMM). The chain crosses the membrane as a helical span at residues 12–34 (ILFNLLIFLCGAALLAVGIWVSI). Residues 35-53 (DGASFLKIFGPLSSSAMQF) are Extracellular-facing. The chain crosses the membrane as a helical span at residues 54 to 76 (VNVGYFLIAAGVVVFALGFLGCY). Residues 77–88 (GAKTESKCALMT) are Cytoplasmic-facing. A helical membrane pass occupies residues 89–111 (FFFILLLIFIAEVAAAVVALVYT). Residues 112 to 214 (TMAEHFLTLL…LYDIRTNAVT (103 aa)) are Extracellular-facing. N-linked (GlcNAc...) asparagine glycosylation is found at N141, N154, N178, and N184. A helical membrane pass occupies residues 215 to 237 (VGGVAAGIGGLELAAMIVSMYLY). Over 238–241 (CNLQ) the chain is Cytoplasmic.

This sequence belongs to the tetraspanin (TM4SF) family. As to quaternary structure, interacts with SLC19A2. Interacts with NTRK1/TRKA.

The protein resides in the lysosome membrane. Its function is as follows. Structural component of specialized membrane microdomains known as tetraspanin-enriched microdomains (TERMs), which act as platforms for receptor clustering and signaling. Participates thereby in diverse biological functions such as cell signal transduction, adhesion, migration and protein trafficking. Regulates neuronal differentiation in response to NGF by facilitating NGF-mediated activation of NTRK1/TRKA receptor tyrosine kinase and subsequent downstream signaling pathways. Plays a role in the inhibition of TNFalpha-induced apoptosis. Mechanistically, inhibits the NF-kappa-B signaling pathway by blocking phosphorylation of CHUK. Also promotes the stability of the thiamine transporter 1/SLC19A2 in intestinal epithelial cells leading to an increase of thiamine uptake process. The chain is Tetraspanin-1 (TSPAN1) from Pongo abelii (Sumatran orangutan).